The chain runs to 342 residues: Prenyl transferase penC (342 aa).

The chain crosses the membrane as a helical span at residues 17 to 37; sequence LSYLTLTVGALALVVVLYISI. An isopentenyl diphosphate-binding site is contributed by His-110. Mg(2+)-binding residues include Asp-117 and Asp-121. Residue Arg-126 coordinates dimethylallyl diphosphate. Asn-154 carries N-linked (GlcNAc...) asparagine glycosylation. Lys-210 provides a ligand contact to dimethylallyl diphosphate.

It belongs to the FPP/GGPP synthase family.

It is found in the membrane. Its pathway is secondary metabolite biosynthesis. Its function is as follows. Prenyl transferase; part of the gene cluster that mediates the biosynthesis of the indole diterpenes penitrems. The geranylgeranyl diphosphate (GGPP) synthase penG catalyzes the first step in penitrem biosynthesis via conversion of farnesyl pyrophosphate and isopentyl pyrophosphate into geranylgeranyl pyrophosphate (GGPP). Condensation of indole-3-glycerol phosphate with GGPP by the prenyl transferase penC then forms 3-geranylgeranylindole (3-GGI). Epoxidation by the FAD-dependent monooxygenase penM leads to a epoxidized-GGI that is substrate of the terpene cyclase penB for cyclization to yield paspaline. Paspaline is subsequently converted to 13-desoxypaxilline by the cytochrome P450 monooxygenase penP, the latter being then converted to paxilline by the cytochrome P450 monooxygenase penQ. Paxilline is converted to beta-paxitriol via C-10 ketoreduction by the short-chain dehydrogenase PC-15 which can be monoprenylated at the C-20 by the indole diterpene prenyltransferase penD. A two-step elimination (acetylation and elimination) process performed by the O-acetyltransferase PC-16 and the P.simplicissimum ptmI-ortholog not yet identified in P.crustosum, leads to the production of the prenylated form of penijanthine. The FAD-linked oxidoreductase ptmO then converts the prenylated form of penijanthine into PC-M5 which is in turn transformed into PC-M4 by the aromatic dimethylallyltransferase PC-22. A series of oxidation steps involving 4 cytochrome P450 monooxygenases (PC-21, PC-05, PC-23, PC-20) and a FAD-dependent monooxygenase (PC-14) are required for the transformation of PC-M4 to penitrems A and E. Synthesis of these final products is proposed to proceed via penitrems D and C (PC-21, PC-05, PC-14) and penitrems B and F (PC-21, PC-05, PC-14, PC-23). In Penicillium crustosum (Blue mold fungus), this protein is Prenyl transferase penC.